A 668-amino-acid chain; its full sequence is MANWISSKLKAAETILQQLDQQAADSLRKDEKSETHDEVFETSPKSGSSPVSLKDQLRKKTYEGSDSGSGSQRNSTEQKPSYLSSSKKVRKPDQSHERTSAPSQSLTQDNTKLTDNDWTELLSTPNQRTSTSTSRSPGGTSAIRGLKKDGKRHGNLGKNPLVSDGKKSSSSNVVNSRGRPQKQTNKEPSDKEVSSPSDADMKNRNAPRDIFVNSTHKESEKDVSGKTPPLDDSRRSANETLPRETSPSVGKRDGRESRRSSVWGKQVREEVSQSNVSDGLTRKESSLSSDESESDYESDSSTDSERERQREERRRRRERVFAEKVATKAVAVIKERENMVARLEGEKLSLEKIVEERAKQQAQEAAELQTNMMETLEAADLEKQKHNNTRMEVLTRLAGLEAENAELTRSLAAGQKKLETQIDQVAVLKQQVELKESTLEELKRNTFNIGGRGTTLKQLDTSRGDKFEHQMLEAEISLLTDKIGRLQDKATKLEADIEMMRKELEEPTEVEIELKRRLNQLTDHLIQKQSQVEALSSEKATILFRIEAVSRLIEENKGMSATEASSQDLEAGDWELSGSKFKPAFQDKIRSGKKHLGWLVMQLNAIFISGTVFLRRNPTAKIWAVVYLVCLHLWVLYILLSHSDASSSGELRSGAVISLENFSNSSLQ.

Residues 22 to 317 (QAADSLRKDE…RQREERRRRR (296 aa)) are disordered. Over residues 26–39 (SLRKDEKSETHDEV) the composition is skewed to basic and acidic residues. 2 stretches are compositionally biased toward polar residues: residues 64-86 (GSDS…LSSS) and 100-113 (SAPS…NTKL). 2 stretches are compositionally biased toward low complexity: residues 123–141 (STPN…GGTS) and 168–178 (SSSSNVVNSRG). Composition is skewed to basic and acidic residues over residues 184–207 (TNKE…RNAP), 215–237 (THKE…RRSA), and 250–259 (GKRDGRESRR). A compositionally biased stretch (acidic residues) spans 290–302 (DESESDYESDSST). Over residues 303-312 (DSERERQREE) the composition is skewed to basic and acidic residues. Residues 331-539 (AVIKERENMV…SQVEALSSEK (209 aa)) are a coiled coil. The next 2 membrane-spanning stretches (helical) occupy residues 594-614 (KHLG…TVFL) and 622-642 (IWAV…LLSH).

It is found in the golgi apparatus membrane. Its function is as follows. Golgi matrix protein playing a role in tethering of vesicles to Golgi membranes and in maintaining the overall structure of the Golgi apparatus. This chain is Golgin candidate 2 (GC2), found in Arabidopsis thaliana (Mouse-ear cress).